A 249-amino-acid polypeptide reads, in one-letter code: Protein YIP5 (249 aa).

The next 5 membrane-spanning stretches (helical) occupy residues 87-107 (LYGP…SNSI), 131-151 (ASII…ILVW), 164-184 (LYGY…PFGL), 188-208 (LASH…SIVF), and 228-248 (LLFG…LIFF).

This sequence belongs to the YIP1 family. In terms of assembly, interacts with the YIP1 family members yip1 and yip4, and several Rab GTPases. The C-terminal cysteines in the Rab GTPase ypt2 are essential for the interaction. Interacts with snx3.

The protein resides in the membrane. In terms of biological role, possible role in vesicle-mediated transport. May be involved in proper membrane localization of Rab GTPases. This chain is Protein YIP5, found in Schizosaccharomyces pombe (strain 972 / ATCC 24843) (Fission yeast).